The sequence spans 927 residues: Bifunctional glutamine synthetase adenylyltransferase/adenylyl-removing enzyme (927 aa).

The adenylyl removase stretch occupies residues 1 to 428 (MTMTDASDLL…AQFDQVFADK (428 aa)). The interval 438 to 927 (DQAAGCIWSG…AALWARVFGA (490 aa)) is adenylyl transferase.

The protein belongs to the GlnE family. Mg(2+) serves as cofactor.

The catalysed reaction is [glutamine synthetase]-O(4)-(5'-adenylyl)-L-tyrosine + phosphate = [glutamine synthetase]-L-tyrosine + ADP. It catalyses the reaction [glutamine synthetase]-L-tyrosine + ATP = [glutamine synthetase]-O(4)-(5'-adenylyl)-L-tyrosine + diphosphate. Involved in the regulation of glutamine synthetase GlnA, a key enzyme in the process to assimilate ammonia. When cellular nitrogen levels are high, the C-terminal adenylyl transferase (AT) inactivates GlnA by covalent transfer of an adenylyl group from ATP to specific tyrosine residue of GlnA, thus reducing its activity. Conversely, when nitrogen levels are low, the N-terminal adenylyl removase (AR) activates GlnA by removing the adenylyl group by phosphorolysis, increasing its activity. The regulatory region of GlnE binds the signal transduction protein PII (GlnB) which indicates the nitrogen status of the cell. This is Bifunctional glutamine synthetase adenylyltransferase/adenylyl-removing enzyme from Burkholderia pseudomallei (strain K96243).